The primary structure comprises 61 residues: Probable tautomerase SERP0934 (61 aa).

P2 (proton acceptor; via imino nitrogen) is an active-site residue.

This sequence belongs to the 4-oxalocrotonate tautomerase family.

The protein is Probable tautomerase SERP0934 of Staphylococcus epidermidis (strain ATCC 35984 / DSM 28319 / BCRC 17069 / CCUG 31568 / BM 3577 / RP62A).